The primary structure comprises 207 residues: Ribosomal RNA small subunit methyltransferase G (207 aa).

Residues G75, L80, 126–127 (VE), and R141 each bind S-adenosyl-L-methionine.

Belongs to the methyltransferase superfamily. RNA methyltransferase RsmG family.

The protein localises to the cytoplasm. The catalysed reaction is guanosine(527) in 16S rRNA + S-adenosyl-L-methionine = N(7)-methylguanosine(527) in 16S rRNA + S-adenosyl-L-homocysteine. In terms of biological role, specifically methylates the N7 position of guanine in position 527 of 16S rRNA. The polypeptide is Ribosomal RNA small subunit methyltransferase G (Psychromonas ingrahamii (strain DSM 17664 / CCUG 51855 / 37)).